Reading from the N-terminus, the 1156-residue chain is Mastermind-like protein 2 (1156 aa).

A disordered region spans residues 81 to 165 (QHGQGARKAG…PPASTPGDQR (85 aa)). Over residues 113–122 (PAASQAAATA) the composition is skewed to low complexity. Residues 153 to 165 (EQQPPASTPGDQR) are compositionally biased toward polar residues. Residue S175 is modified to Phosphoserine. 7 disordered regions span residues 340 to 359 (FNID…SLPM), 369 to 506 (SPGL…GSGQ), 531 to 630 (QQKP…QQQQ), 658 to 680 (QQQQ…QPLL), 705 to 743 (YQVS…GYMN), 784 to 820 (IAPQ…YSGG), and 1059 to 1100 (LPNL…FQGT). Composition is skewed to polar residues over residues 344 to 354 (LGQQSQRSTPR), 371 to 380 (GLTQGPSGSP), 393 to 419 (MANS…TGSG), and 428 to 437 (QEVSHAQQLK). Over residues 440–470 (AANRQQHARMQQHQQQHQPTNWSALPSSAGP) the composition is skewed to low complexity. 3 stretches are compositionally biased toward polar residues: residues 484 to 496 (SFGQ…QSSP), 532 to 543 (QKPQDLSRSFIN), and 563 to 587 (NSDQ…LHYT). Residues 588–630 (QQQQQQQQQQQQQQQQQQQQQQQQQQQQQQQQQQSSISAQQQQ) show a composition bias toward low complexity. Composition is skewed to low complexity over residues 706–725 (QVSQ…NTGP) and 733–743 (SNPNTGSGYMN). Residues 807-820 (NVGNMQPTAQYSGG) show a composition bias toward polar residues.

This sequence belongs to the mastermind family. As to quaternary structure, interacts through its N-terminal region with the ankyrin repeat region of the Notch proteins NOTCH1, NOTCH2, NOTCH3 and NOTCH4. Forms a DNA-binding complex with Notch proteins and RBPSUH/RBP-J kappa. As to expression, widely expressed with high levels detected in placenta, salivary gland and skeletal muscle.

The protein resides in the nucleus speckle. Acts as a transcriptional coactivator for NOTCH proteins. Has been shown to amplify NOTCH-induced transcription of HES1. Potentiates activation by NOTCH3 and NOTCH4 more efficiently than MAML1 or MAML3. This chain is Mastermind-like protein 2 (MAML2), found in Homo sapiens (Human).